We begin with the raw amino-acid sequence, 697 residues long: PHD finger protein At2g01810 (697 aa).

Disordered stretches follow at residues 319–362 and 457–478; these read DENS…QYYS and EQKRKKKRKVKPQETSECTSTT. A compositionally biased stretch (basic and acidic residues) spans 339 to 349; sequence SGRDTVLDDHN. Residues 635 to 685 form a PHD-type zinc finger; the sequence is TVDCKCGARDDDGERMVACDACKVWHHTLCNSIEDDEAVPSVFLCNMCYGD.

Its subcellular location is the nucleus. The polypeptide is PHD finger protein At2g01810 (Arabidopsis thaliana (Mouse-ear cress)).